The primary structure comprises 191 residues: Protein GrpE (191 aa).

A disordered region spans residues 1–49 (MSEEKQTAEQVEAAEQEEVTEQAEQAASQEQHEETAGQEEALQHQIDEL). A compositionally biased stretch (acidic residues) spans 12–21 (EAAEQEEVTE). A compositionally biased stretch (basic and acidic residues) spans 30 to 49 (EQHEETAGQEEALQHQIDEL).

The protein belongs to the GrpE family. Homodimer.

It localises to the cytoplasm. Participates actively in the response to hyperosmotic and heat shock by preventing the aggregation of stress-denatured proteins, in association with DnaK and GrpE. It is the nucleotide exchange factor for DnaK and may function as a thermosensor. Unfolded proteins bind initially to DnaJ; upon interaction with the DnaJ-bound protein, DnaK hydrolyzes its bound ATP, resulting in the formation of a stable complex. GrpE releases ADP from DnaK; ATP binding to DnaK triggers the release of the substrate protein, thus completing the reaction cycle. Several rounds of ATP-dependent interactions between DnaJ, DnaK and GrpE are required for fully efficient folding. The sequence is that of Protein GrpE from Bacillus velezensis (strain DSM 23117 / BGSC 10A6 / LMG 26770 / FZB42) (Bacillus amyloliquefaciens subsp. plantarum).